A 721-amino-acid chain; its full sequence is Protein quick-to-court (721 aa).

Disordered regions lie at residues methionine 1 to histidine 42, valine 143 to alanine 210, serine 360 to leucine 379, aspartate 393 to serine 428, and serine 441 to glycine 471. The segment covering glutamine 17–histidine 31 has biased composition (basic and acidic residues). Residues asparagine 161 to proline 201 are compositionally biased toward low complexity. Over residues proline 362–leucine 379 the composition is skewed to basic and acidic residues. Positions arginine 406 to glutamine 420 are enriched in low complexity. Residues serine 441–alanine 454 are compositionally biased toward polar residues. A coiled-coil region spans residues lysine 511 to lysine 569. In terms of domain architecture, GRIP spans histidine 668 to alanine 716.

As to expression, expressed in the third antennal segment and the maxillary palp, with increased expression near the cuticle of both olfactory organs. Also detected in the second antenna segment. In the brain, expressed in the central nervous system, with high levels of expression in the visual system including the retina and optic lobe, and uniform expression in the cortex. Detected in the thorax and abdomen, with increased expression in the ventral ganglion. In males, detected in the reproductive tract including the ejaculatory bulb and testis.

In adult males, modulates sexual behavior by playing a role in sex discrimination and maintaining normal levels of sexual activity towards both males and females. The sequence is that of Protein quick-to-court from Drosophila melanogaster (Fruit fly).